A 360-amino-acid chain; its full sequence is Phenylalanine--tRNA ligase alpha subunit (360 aa).

E260 is a binding site for Mg(2+).

Belongs to the class-II aminoacyl-tRNA synthetase family. Phe-tRNA synthetase alpha subunit type 1 subfamily. As to quaternary structure, tetramer of two alpha and two beta subunits. The cofactor is Mg(2+).

It localises to the cytoplasm. The enzyme catalyses tRNA(Phe) + L-phenylalanine + ATP = L-phenylalanyl-tRNA(Phe) + AMP + diphosphate + H(+). The polypeptide is Phenylalanine--tRNA ligase alpha subunit (Sinorhizobium fredii (strain NBRC 101917 / NGR234)).